The sequence spans 234 residues: Ion-translocating oxidoreductase complex subunit E (234 aa).

A run of 5 helical transmembrane segments spans residues 62–82 (LGLG…ISLF), 92–112 (IPIY…LMNA), 116–136 (TLYQ…IIIG), 151–171 (IWDG…LGAL), and 205–225 (SFLL…LLAI).

The protein belongs to the NqrDE/RnfAE family. As to quaternary structure, the complex is composed of six subunits: RnfA, RnfB, RnfC, RnfD, RnfE and RnfG.

It is found in the cell inner membrane. Part of a membrane-bound complex that couples electron transfer with translocation of ions across the membrane. The chain is Ion-translocating oxidoreductase complex subunit E from Haemophilus influenzae (strain PittGG).